Consider the following 295-residue polypeptide: Pyrroline-5-carboxylate reductase (295 aa).

This sequence belongs to the pyrroline-5-carboxylate reductase family.

It localises to the cytoplasm. It catalyses the reaction L-proline + NADP(+) = (S)-1-pyrroline-5-carboxylate + NADPH + 2 H(+). The catalysed reaction is L-proline + NAD(+) = (S)-1-pyrroline-5-carboxylate + NADH + 2 H(+). It functions in the pathway amino-acid biosynthesis; L-proline biosynthesis; L-proline from L-glutamate 5-semialdehyde: step 1/1. Functionally, catalyzes the reduction of 1-pyrroline-5-carboxylate (PCA) to L-proline. This is Pyrroline-5-carboxylate reductase from Mycobacterium tuberculosis (strain CDC 1551 / Oshkosh).